The sequence spans 225 residues: NAD(P)H-quinone oxidoreductase subunit K, chloroplastic (225 aa).

Residues Cys-43, Cys-44, Cys-108, and Cys-139 each contribute to the [4Fe-4S] cluster site.

Belongs to the complex I 20 kDa subunit family. In terms of assembly, NDH is composed of at least 16 different subunits, 5 of which are encoded in the nucleus. [4Fe-4S] cluster is required as a cofactor.

It is found in the plastid. Its subcellular location is the chloroplast thylakoid membrane. The catalysed reaction is a plastoquinone + NADH + (n+1) H(+)(in) = a plastoquinol + NAD(+) + n H(+)(out). It catalyses the reaction a plastoquinone + NADPH + (n+1) H(+)(in) = a plastoquinol + NADP(+) + n H(+)(out). In terms of biological role, NDH shuttles electrons from NAD(P)H:plastoquinone, via FMN and iron-sulfur (Fe-S) centers, to quinones in the photosynthetic chain and possibly in a chloroplast respiratory chain. The immediate electron acceptor for the enzyme in this species is believed to be plastoquinone. Couples the redox reaction to proton translocation, and thus conserves the redox energy in a proton gradient. The sequence is that of NAD(P)H-quinone oxidoreductase subunit K, chloroplastic from Arabidopsis thaliana (Mouse-ear cress).